The sequence spans 179 residues: Large ribosomal subunit protein uL6 (179 aa).

The protein belongs to the universal ribosomal protein uL6 family. Part of the 50S ribosomal subunit.

Its function is as follows. This protein binds to the 23S rRNA, and is important in its secondary structure. It is located near the subunit interface in the base of the L7/L12 stalk, and near the tRNA binding site of the peptidyltransferase center. The protein is Large ribosomal subunit protein uL6 of Methylacidiphilum infernorum (isolate V4) (Methylokorus infernorum (strain V4)).